Reading from the N-terminus, the 222-residue chain is Superoxide dismutase [Mn], mitochondrial (222 aa).

The N-terminal 24 residues, 1-24, are a transit peptide targeting the mitochondrion; that stretch reads MLSRAVCGTSRQLAPVLGYLGSRQ. His50 lines the Mn(2+) pocket. A 3'-nitrotyrosine modification is found at Tyr58. 2 positions are modified to N6-acetyllysine; alternate: Lys68 and Lys75. Lys68 and Lys75 each carry N6-succinyllysine; alternate. His98 serves as a coordination point for Mn(2+). Lys114 is subject to N6-acetyllysine. N6-acetyllysine; alternate occurs at positions 122 and 130. N6-succinyllysine; alternate occurs at positions 122 and 130. Residues Asp183 and His187 each coordinate Mn(2+). Lys202 is modified (N6-acetyllysine).

This sequence belongs to the iron/manganese superoxide dismutase family. In terms of assembly, homotetramer. It depends on Mn(2+) as a cofactor. Nitrated under oxidative stress. Nitration coupled with oxidation inhibits the catalytic activity. In terms of processing, acetylation at Lys-122 decreases enzymatic activity. Deacetylated by SIRT3 upon exposure to ionizing radiations or after long fasting. Post-translationally, polyubiquitinated; leading to proteasomal degradation. Deubiquitinated by USP36 which increases protein stability.

It is found in the mitochondrion matrix. The catalysed reaction is 2 superoxide + 2 H(+) = H2O2 + O2. In terms of biological role, destroys superoxide anion radicals which are normally produced within the cells and which are toxic to biological systems. This Homo sapiens (Human) protein is Superoxide dismutase [Mn], mitochondrial (SOD2).